The sequence spans 946 residues: Aminopeptidase N (946 aa).

Positions 1–15 (MRLLICLTLLGLVCG) are cleaved as a signal peptide. Asn60 is a glycosylation site (N-linked (GlcNAc...) asparagine). Residue 308 to 312 (GAMEN) coordinates substrate. His344 provides a ligand contact to Zn(2+). The active-site Proton acceptor is Glu345. Positions 348 and 367 each coordinate Zn(2+). N-linked (GlcNAc...) asparagine glycosylation is found at Asn550 and Asn605. 2 disulfide bridges follow: Cys715-Cys722 and Cys751-Cys787.

It belongs to the peptidase M1 family. It depends on Zn(2+) as a cofactor.

It is found in the cell membrane. The enzyme catalyses Release of an N-terminal amino acid, Xaa-|-Yaa- from a peptide, amide or arylamide. Xaa is preferably Ala, but may be most amino acids including Pro (slow action). When a terminal hydrophobic residue is followed by a prolyl residue, the two may be released as an intact Xaa-Pro dipeptide.. This Plutella xylostella (Diamondback moth) protein is Aminopeptidase N (APN1).